Here is a 216-residue protein sequence, read N- to C-terminus: Ethylene-inducing xylanase (216 aa).

Positions 1–19 (MVSFSSLFVAACAAVTAFA) are cleaved as a signal peptide. One can recognise a GH11 domain in the interval 28–216 (AITTSQQGTS…SSGSSDITVS (189 aa)). Glu-112 functions as the Nucleophile in the catalytic mechanism. Glu-203 (proton donor) is an active-site residue.

The protein belongs to the glycosyl hydrolase 11 (cellulase G) family.

It localises to the secreted. It carries out the reaction Endohydrolysis of (1-&gt;4)-beta-D-xylosidic linkages in xylans.. It functions in the pathway glycan degradation; xylan degradation. Its function is as follows. Endo-1,4-beta-xylanase involved in the hydrolysis of xylan, a major structural heterogeneous polysaccharide found in plant biomass representing the second most abundant polysaccharide in the biosphere, after cellulose. Acts as a pathogen-associated molecular pattern (PAMP) that can trigger plant cell death. Triggers a series of immune responses in citrus fruit and enhanced the resistance of citrus and other fruit against fungal pathogens. This is Ethylene-inducing xylanase from Penicillium digitatum (strain Pd1 / CECT 20795) (Green mold).